Here is a 306-residue protein sequence, read N- to C-terminus: tRNA pseudouridine synthase B (306 aa).

Catalysis depends on Asp-43, which acts as the Nucleophile.

It belongs to the pseudouridine synthase TruB family. Type 1 subfamily.

It carries out the reaction uridine(55) in tRNA = pseudouridine(55) in tRNA. Functionally, responsible for synthesis of pseudouridine from uracil-55 in the psi GC loop of transfer RNAs. This Anaplasma marginale (strain St. Maries) protein is tRNA pseudouridine synthase B.